Consider the following 166-residue polypeptide: NAD(P)H-quinone oxidoreductase subunit I, chloroplastic (166 aa).

2 consecutive 4Fe-4S ferredoxin-type domains span residues Gly-55–Gln-84 and Val-95–Glu-124. The [4Fe-4S] cluster site is built by Cys-64, Cys-67, Cys-70, Cys-74, Cys-104, Cys-107, Cys-110, and Cys-114.

The protein belongs to the complex I 23 kDa subunit family. As to quaternary structure, NDH is composed of at least 16 different subunits, 5 of which are encoded in the nucleus. Requires [4Fe-4S] cluster as cofactor.

It is found in the plastid. Its subcellular location is the chloroplast thylakoid membrane. It carries out the reaction a plastoquinone + NADH + (n+1) H(+)(in) = a plastoquinol + NAD(+) + n H(+)(out). The catalysed reaction is a plastoquinone + NADPH + (n+1) H(+)(in) = a plastoquinol + NADP(+) + n H(+)(out). NDH shuttles electrons from NAD(P)H:plastoquinone, via FMN and iron-sulfur (Fe-S) centers, to quinones in the photosynthetic chain and possibly in a chloroplast respiratory chain. The immediate electron acceptor for the enzyme in this species is believed to be plastoquinone. Couples the redox reaction to proton translocation, and thus conserves the redox energy in a proton gradient. This Coreopsis petrophiloides (Tickseed) protein is NAD(P)H-quinone oxidoreductase subunit I, chloroplastic.